The primary structure comprises 539 residues: Capsid protein VP1 (539 aa).

A shell domain region spans residues 1–221 (MKMASNDANP…FIFLVPPTVE (221 aa)). The interval 222-274 (SRTKPFTVPVLTVEEMSNSRFPIPLEKLYTGPSSAFVVQPQNGRCTTDGVLLG) is P1 sub-domain 1. Residues 222-539 (SRTKPFTVPV…GNGTGRRRAL (318 aa)) are protruding domain. The interval 275–417 (TTQLSAVNIC…SGRTGHNVHL (143 aa)) is P2 sub-domain. The P1 sub-domain 2 stretch occupies residues 418–539 (APAVAPTFPG…GNGTGRRRAL (122 aa)).

Belongs to the caliciviridae capsid protein family. As to quaternary structure, homodimer. Homomultimer. Interacts with the minor capsid protein VP2. Interacts (via C-terminus) with host type I histo-blood group structures antigens at the surface of target cells. May be cleaved by host protease to generate soluble capsid protein. Assembled capsid cannot be cleaved.

The protein localises to the virion. It localises to the host cytoplasm. Functionally, capsid protein self assembles to form an icosahedral capsid with a T=3 symmetry, about 38 nm in diameter, and consisting of 180 capsid proteins. A smaller form of capsid with a diameter of 23 nm might be capsid proteins assembled as icosahedron with T=1 symmetry. The capsid encapsulates the genomic RNA and is decorated with VP2 proteins. Attaches virion to target cells by binding histo-blood group antigens (HBGAs) present on gastroduodenal epithelial cells. The soluble capsid protein may play a role in viral immunoevasion. This chain is Capsid protein VP1, found in Homo sapiens (Human).